The chain runs to 141 residues: ATP synthase epsilon chain (141 aa).

The protein belongs to the ATPase epsilon chain family. F-type ATPases have 2 components, CF(1) - the catalytic core - and CF(0) - the membrane proton channel. CF(1) has five subunits: alpha(3), beta(3), gamma(1), delta(1), epsilon(1). CF(0) has three main subunits: a, b and c.

It localises to the cell inner membrane. Functionally, produces ATP from ADP in the presence of a proton gradient across the membrane. This is ATP synthase epsilon chain from Burkholderia thailandensis (strain ATCC 700388 / DSM 13276 / CCUG 48851 / CIP 106301 / E264).